The primary structure comprises 61 residues: Small ribosomal subunit protein uS14 (61 aa).

Zn(2+)-binding residues include Cys-24, Cys-27, Cys-40, and Cys-43.

This sequence belongs to the universal ribosomal protein uS14 family. Zinc-binding uS14 subfamily. As to quaternary structure, part of the 30S ribosomal subunit. Contacts proteins S3 and S10. Zn(2+) serves as cofactor.

Functionally, binds 16S rRNA, required for the assembly of 30S particles and may also be responsible for determining the conformation of the 16S rRNA at the A site. The protein is Small ribosomal subunit protein uS14 of Desulfovibrio desulfuricans (strain ATCC 27774 / DSM 6949 / MB).